We begin with the raw amino-acid sequence, 465 residues long: Ribulose bisphosphate carboxylase large chain (465 aa).

Lys-4 bears the N6,N6,N6-trimethyllysine mark. Residues Asn-113 and Thr-163 each contribute to the substrate site. Lys-165 acts as the Proton acceptor in catalysis. Lys-167 lines the substrate pocket. The Mg(2+) site is built by Lys-191, Asp-193, and Glu-194. Lys-191 carries the N6-carboxylysine modification. The active-site Proton acceptor is His-284. 3 residues coordinate substrate: Arg-285, His-317, and Ser-369.

This sequence belongs to the RuBisCO large chain family. Type I subfamily. In terms of assembly, heterohexadecamer of 8 large chains and 8 small chains; disulfide-linked. The disulfide link is formed within the large subunit homodimers. Mg(2+) is required as a cofactor. The disulfide bond which can form in the large chain dimeric partners within the hexadecamer appears to be associated with oxidative stress and protein turnover.

Its subcellular location is the plastid. The protein localises to the chloroplast. It catalyses the reaction 2 (2R)-3-phosphoglycerate + 2 H(+) = D-ribulose 1,5-bisphosphate + CO2 + H2O. The catalysed reaction is D-ribulose 1,5-bisphosphate + O2 = 2-phosphoglycolate + (2R)-3-phosphoglycerate + 2 H(+). Functionally, ruBisCO catalyzes two reactions: the carboxylation of D-ribulose 1,5-bisphosphate, the primary event in carbon dioxide fixation, as well as the oxidative fragmentation of the pentose substrate in the photorespiration process. Both reactions occur simultaneously and in competition at the same active site. The polypeptide is Ribulose bisphosphate carboxylase large chain (Platytheca verticillata).